Reading from the N-terminus, the 463-residue chain is MTDKAPQKTHLNIVIIGHVDSGKSTTTGHLIYKCGGFDPRALEKVEAAAAQLGKSSFKFAWILDKLKAERERGITIDISLWKFQTNRFTITIIDAPGHRDFIKNMITGTSQADVALLVVSAATGEFEAGVSRNGQTREHALLAYTMGVKQLIVCVNKMDLTDPPYSHKRFDEVVRNVMVYLKKIGYNPATIPFVPVSGWTGENISSPSQKMGWFKGWKVKRKDGFTKGQSLLEVLDALVPPVRPANKPLRLPLQDVYKIGGIGTVPVGKIETGILKPGMTISFAPSGFSAEVKSIEMHHEPLQMAFPGFNIGFNVKNIAVKSLKRGNVAGNSKSDPPTEASSFTAQVIILNHPGFIKAGYSPVIDCHTAHITCQFAELQEKIDRRTGKKLEDNPGLLKSGDAAIITLKPIKPFCVERFFDYPPLGRFAARDLKQTVAVGVVKSVEHKAGAAARRQVQKPVLVK.

A tr-type G domain is found at 8–245 (KTHLNIVIIG…DALVPPVRPA (238 aa)). The segment at 17-24 (GHVDSGKS) is G1. 17 to 24 (GHVDSGKS) contacts GTP. The interval 73–77 (GITID) is G2. Residues 94-97 (DAPG) are G3. Residues 94 to 98 (DAPGH) and 156 to 159 (NKMD) contribute to the GTP site. Residues 156-159 (NKMD) form a G4 region. Residues 197-199 (SGW) are G5.

The protein belongs to the TRAFAC class translation factor GTPase superfamily. Classic translation factor GTPase family. EF-Tu/EF-1A subfamily. In terms of assembly, the 42S RNP particle comprises four subunits each of which contains one molecule of 5S RNA, three molecules of tRNA, two molecules of EF1-alpha and one molecule of the 5S RNA binding protein 43.

The protein resides in the cytoplasm. Functionally, this protein is one of two protein components of a 42S RNP particle that is very abundant in previtellogenic oocytes. A major function served by 42sp50 appears to be the storage of tRNAs for later use in oogenesis and early embryogenesis. Purified 42S particles can directly transfer aminoacyl tRNA to ribosomes. This chain is Elongation factor 1-alpha, found in Xenopus laevis (African clawed frog).